The chain runs to 179 residues: Large ribosomal subunit protein uL15 (179 aa).

This sequence belongs to the universal ribosomal protein uL15 family. In terms of assembly, part of the 50S ribosomal subunit.

In terms of biological role, binds to the 23S rRNA. This is Large ribosomal subunit protein uL15 from Archaeoglobus fulgidus (strain ATCC 49558 / DSM 4304 / JCM 9628 / NBRC 100126 / VC-16).